Here is a 457-residue protein sequence, read N- to C-terminus: MGREIISIHIGQAGVQVGNSCWELYCLEHGIERDGSIPADRKQSSDVNNLNKDLGTFFSESTNGKKVVPRAIFLDLEPTVIDEIRTGDYKNLFHPEQLITGKEDAANNYARGHYTVGKELIDVCVDRIRRLADQCDGLQGFLVFHSVGGGTGSGFGSLLLQKLALDYGGKKSKLDFCVYPSPQVSTSVVEPYNSVLSTHSLLEHTDVSFMLDNEAIYNICKNSLDIEKPTYTNLNRLIAQVISSLTSSLRFPGQLNLDINDIQTNLVPFPRLHFVLCSYAPVISREKAHHETITVDNITSAVFSEKNIMAKCQPNLGKYMACCLMYRGDIVPKEAQKAVQNIRSEKSRNVSFVDWSPTGFKCGINNQAPVSTKDSEMAEVKKSVCMLSNTTAISQVFSRINHKFDLMFVKRAFVHWYVGEGMEEGEFAEARDDLLALEKDYESVSASTEGEEQEEEY.

GTP-binding residues include glutamine 12, glutamate 77, serine 146, glycine 150, threonine 151, threonine 186, asparagine 213, and asparagine 235. Glutamate 77 is a binding site for Mg(2+).

Belongs to the tubulin family. As to quaternary structure, dimer of alpha and beta chains. A typical microtubule is a hollow water-filled tube with an outer diameter of 25 nm and an inner diameter of 15 nM. Alpha-beta heterodimers associate head-to-tail to form protofilaments running lengthwise along the microtubule wall with the beta-tubulin subunit facing the microtubule plus end conferring a structural polarity. Microtubules usually have 13 protofilaments but different protofilament numbers can be found in some organisms and specialized cells. Mg(2+) is required as a cofactor. Post-translationally, undergoes a tyrosination/detyrosination cycle, the cyclic removal and re-addition of a C-terminal tyrosine residue by the enzymes tubulin tyrosine carboxypeptidase (TTCP) and tubulin tyrosine ligase (TTL), respectively.

The protein localises to the cytoplasm. It localises to the cytoskeleton. It catalyses the reaction GTP + H2O = GDP + phosphate + H(+). In terms of biological role, tubulin is the major constituent of microtubules, a cylinder consisting of laterally associated linear protofilaments composed of alpha- and beta-tubulin heterodimers. Microtubules grow by the addition of GTP-tubulin dimers to the microtubule end, where a stabilizing cap forms. Below the cap, tubulin dimers are in GDP-bound state, owing to GTPase activity of alpha-tubulin. The polypeptide is Tubulin alpha chain (tubA) (Dictyostelium discoideum (Social amoeba)).